Here is a 112-residue protein sequence, read N- to C-terminus: DNA-binding protein Bv3F (112 aa).

The interval 65–92 (KRNSKRMSTVPKYRDPATGKTWSGRGRQ) is disordered. 2 DNA-binding regions span residues 89 to 94 (RGRQPA) and 89 to 95 (RGRQPAW).

Belongs to the histone-like protein H-NS family. As to quaternary structure, homodimer that oligomerizes on DNA into higher-order complexes that form bridges between disparate regions of DNA compacting it.

Its subcellular location is the cytoplasm. It is found in the nucleoid. Functionally, a DNA-binding protein implicated in transcriptional repression and chromosome organization and compaction. Binds in the minor groove of AT-rich DNA. Binds nucleation sites in AT-rich DNA and bridges them, forming higher-order nucleoprotein complexes and condensing the chromosome. As many horizontally transferred genes are AT-rich, it plays a central role in silencing foreign genes. This is DNA-binding protein Bv3F from Burkholderia vietnamiensis (strain G4 / LMG 22486) (Burkholderia cepacia (strain R1808)).